The following is a 362-amino-acid chain: Glutaminyl-peptide cyclotransferase (362 aa).

Residues 1–35 form the signal peptide; the sequence is MAGSEDKRVVGTLHLLLLQATVLSLTAGNLSLVSA. Residues asparagine 29 and asparagine 50 are each glycosylated (N-linked (GlcNAc...) asparagine). A disulfide bridge links cysteine 140 with cysteine 165. Aspartate 160 is a Zn(2+) binding site. The active-site Proton acceptor is the glutamate 202. Glutamate 203 is a binding site for Zn(2+). Catalysis depends on aspartate 249, which acts as the Proton acceptor. Residue histidine 331 coordinates Zn(2+).

The protein belongs to the glutaminyl-peptide cyclotransferase family.

Its subcellular location is the secreted. It catalyses the reaction N-terminal L-glutaminyl-[peptide] = N-terminal 5-oxo-L-prolyl-[peptide] + NH4(+). Functionally, responsible for the biosynthesis of pyroglutamyl peptides. Has a bias against acidic and tryptophan residues adjacent to the N-terminal glutaminyl residue and a lack of importance of chain length after the second residue. The chain is Glutaminyl-peptide cyclotransferase (Qpct) from Mus musculus (Mouse).